We begin with the raw amino-acid sequence, 264 residues long: 3-methyl-2-oxobutanoate hydroxymethyltransferase (264 aa).

Mg(2+)-binding residues include Asp-45 and Asp-84. Residues 45–46 (DS), Asp-84, and Lys-113 each bind 3-methyl-2-oxobutanoate. Position 115 (Glu-115) interacts with Mg(2+). Glu-182 serves as the catalytic Proton acceptor.

It belongs to the PanB family. Homodecamer; pentamer of dimers. Mg(2+) is required as a cofactor.

It is found in the cytoplasm. It catalyses the reaction 3-methyl-2-oxobutanoate + (6R)-5,10-methylene-5,6,7,8-tetrahydrofolate + H2O = 2-dehydropantoate + (6S)-5,6,7,8-tetrahydrofolate. It participates in cofactor biosynthesis; (R)-pantothenate biosynthesis; (R)-pantoate from 3-methyl-2-oxobutanoate: step 1/2. Functionally, catalyzes the reversible reaction in which hydroxymethyl group from 5,10-methylenetetrahydrofolate is transferred onto alpha-ketoisovalerate to form ketopantoate. The sequence is that of 3-methyl-2-oxobutanoate hydroxymethyltransferase from Caldicellulosiruptor bescii (strain ATCC BAA-1888 / DSM 6725 / KCTC 15123 / Z-1320) (Anaerocellum thermophilum).